Reading from the N-terminus, the 213-residue chain is Putative nascent polypeptide-associated complex subunit alpha-like protein (213 aa).

Positions 1-46 are disordered; the sequence is MPGEATETVPAIEQQLLQPQAETGSGTESDSDESVPELEEQDSTQV. Polar residues predominate over residues 15–28; it reads QLLQPQAETGSGTE. Acidic residues predominate over residues 29–42; sequence SDSDESVPELEEQD. A phosphoserine mark is found at Ser43 and Ser131. The NAC-A/B domain maps to 69–134; the sequence is RRSEKKARKA…AKIEDLSQEA (66 aa). N6-acetyllysine; alternate is present on Lys141. Lys141 is covalently cross-linked (Glycyl lysine isopeptide (Lys-Gly) (interchain with G-Cter in SUMO2); alternate). A Phosphothreonine modification is found at Thr160. 3 positions are modified to phosphoserine: Ser165, Ser185, and Ser201. The UBA domain occupies 175–211; that stretch reads VEIKDIELVLSQANVWGAKAVRALKNSNDIVNAIMEL. Thr212 carries the phosphothreonine modification.

This sequence belongs to the NAC-alpha family.

The chain is Putative nascent polypeptide-associated complex subunit alpha-like protein from Homo sapiens (Human).